The sequence spans 633 residues: Uracil permease (633 aa).

The next 12 membrane-spanning stretches (helical) occupy residues 143–163 (WWQC…FVVL), 173–193 (LSFP…WPVI), 197–217 (VMAI…VSLM), 242–262 (YEFM…LVPP), 268–288 (LFTV…IWAI), 310–330 (FSWA…TMVI), 350–370 (LVCI…VTAA), 400–420 (AGVF…NISA), 442–462 (GSLF…MATS), 465–485 (FTMA…VVCS), 521–541 (ALAA…AEVG), and 559–579 (YWVG…FFPV).

This sequence belongs to the purine-cytosine permease (2.A.39) family. In terms of processing, glycosylated (possible); but there is not yet direct biochemical evidence for it.

It localises to the membrane. Its function is as follows. Transport of uracil. The polypeptide is Uracil permease (FUR4) (Saccharomyces cerevisiae (strain ATCC 204508 / S288c) (Baker's yeast)).